The following is a 64-amino-acid chain: Ferredoxin-2 (64 aa).

Positions arginine 2–glutamate 29 constitute a 4Fe-4S ferredoxin-type domain. 3 residues coordinate [3Fe-4S] cluster: cysteine 10, cysteine 16, and cysteine 55.

The cofactor is [3Fe-4S] cluster.

In terms of biological role, electron transport protein for the cytochrome P-450-SU2 system. This Streptomyces griseolus protein is Ferredoxin-2 (subB).